The sequence spans 315 residues: Methionyl-tRNA formyltransferase (315 aa).

Residue 110 to 113 (SLLP) coordinates (6S)-5,6,7,8-tetrahydrofolate.

Belongs to the Fmt family.

The catalysed reaction is L-methionyl-tRNA(fMet) + (6R)-10-formyltetrahydrofolate = N-formyl-L-methionyl-tRNA(fMet) + (6S)-5,6,7,8-tetrahydrofolate + H(+). Its function is as follows. Attaches a formyl group to the free amino group of methionyl-tRNA(fMet). The formyl group appears to play a dual role in the initiator identity of N-formylmethionyl-tRNA by promoting its recognition by IF2 and preventing the misappropriation of this tRNA by the elongation apparatus. The sequence is that of Methionyl-tRNA formyltransferase from Mycolicibacterium paratuberculosis (strain ATCC BAA-968 / K-10) (Mycobacterium paratuberculosis).